The sequence spans 516 residues: Putative glucosylceramidase 2 (516 aa).

Residues 1–23 form the signal peptide; the sequence is MSIAWSCFVLGLFALASLQVALA. Glu254 (proton donor) is an active-site residue. Residue Glu358 is the Nucleophile of the active site.

The protein belongs to the glycosyl hydrolase 30 family.

The catalysed reaction is a beta-D-glucosylceramide + H2O = an N-acyl-sphingoid base + D-glucose. It carries out the reaction a beta-D-glucosyl-(1&lt;-&gt;1')-N-acylsphing-4-enine + H2O = an N-acylsphing-4-enine + D-glucose. It catalyses the reaction an N-acyl-1-beta-D-glucosyl-15-methylhexadecasphing-4-enine + H2O = an N-acyl-15-methylhexadecasphing-4-enine + D-glucose. It functions in the pathway lipid metabolism; sphingolipid metabolism. Its function is as follows. Glucosylceramidase that catalyzes the hydrolysis of glucosylceramides into free ceramides and glucose. C.elegans contain specific sphingoid bases, which are unique or different in structure compared to the sphingoid bases found in other animals. Two examples of these distinctive compounds are: 15-methylhexadecasphinganine and 15-methylhexadecasphing-4-enine. The sequence is that of Putative glucosylceramidase 2 (gba-2) from Caenorhabditis elegans.